We begin with the raw amino-acid sequence, 98 residues long: Integration host factor subunit alpha (98 aa).

It belongs to the bacterial histone-like protein family. As to quaternary structure, heterodimer of an alpha and a beta chain.

Functionally, this protein is one of the two subunits of integration host factor, a specific DNA-binding protein that functions in genetic recombination as well as in transcriptional and translational control. The protein is Integration host factor subunit alpha of Acinetobacter baumannii (strain AB307-0294).